A 237-amino-acid polypeptide reads, in one-letter code: 4-hydroxy-tetrahydrodipicolinate reductase (237 aa).

NAD(+) is bound by residues 11-16 (GASGRM), 92-94 (GTT), and 116-119 (GSNF). Histidine 148 (proton donor/acceptor) is an active-site residue. A (S)-2,3,4,5-tetrahydrodipicolinate-binding site is contributed by histidine 149. The active-site Proton donor is the lysine 152. 158–159 (GS) provides a ligand contact to (S)-2,3,4,5-tetrahydrodipicolinate.

The protein belongs to the DapB family.

The protein localises to the cytoplasm. It catalyses the reaction (S)-2,3,4,5-tetrahydrodipicolinate + NAD(+) + H2O = (2S,4S)-4-hydroxy-2,3,4,5-tetrahydrodipicolinate + NADH + H(+). The enzyme catalyses (S)-2,3,4,5-tetrahydrodipicolinate + NADP(+) + H2O = (2S,4S)-4-hydroxy-2,3,4,5-tetrahydrodipicolinate + NADPH + H(+). It functions in the pathway amino-acid biosynthesis; L-lysine biosynthesis via DAP pathway; (S)-tetrahydrodipicolinate from L-aspartate: step 4/4. Its function is as follows. Catalyzes the conversion of 4-hydroxy-tetrahydrodipicolinate (HTPA) to tetrahydrodipicolinate. The sequence is that of 4-hydroxy-tetrahydrodipicolinate reductase from Xylella fastidiosa (strain M12).